A 270-amino-acid chain; its full sequence is Release factor glutamine methyltransferase (270 aa).

S-adenosyl-L-methionine is bound by residues 113–117, D136, and N177; that span reads GTGSG. 177-180 is a binding site for substrate; that stretch reads NPPY.

It belongs to the protein N5-glutamine methyltransferase family. PrmC subfamily.

It carries out the reaction L-glutaminyl-[peptide chain release factor] + S-adenosyl-L-methionine = N(5)-methyl-L-glutaminyl-[peptide chain release factor] + S-adenosyl-L-homocysteine + H(+). Methylates the class 1 translation termination release factors RF1/PrfA and RF2/PrfB on the glutamine residue of the universally conserved GGQ motif. The sequence is that of Release factor glutamine methyltransferase from Lactococcus lactis subsp. lactis (strain IL1403) (Streptococcus lactis).